A 205-amino-acid polypeptide reads, in one-letter code: Putative STAG3-like protein 1 (205 aa).

The SCD domain occupies 10–95; that stretch reads PKVTCRDVLP…GRFKDWMVSM (86 aa).

This sequence belongs to the SCC3 family.

It is found in the nucleus. This is Putative STAG3-like protein 1 (STAG3L1) from Homo sapiens (Human).